Consider the following 99-residue polypeptide: Aspartyl/glutamyl-tRNA(Asn/Gln) amidotransferase subunit C (99 aa).

It belongs to the GatC family. As to quaternary structure, heterotrimer of A, B and C subunits.

The catalysed reaction is L-glutamyl-tRNA(Gln) + L-glutamine + ATP + H2O = L-glutaminyl-tRNA(Gln) + L-glutamate + ADP + phosphate + H(+). The enzyme catalyses L-aspartyl-tRNA(Asn) + L-glutamine + ATP + H2O = L-asparaginyl-tRNA(Asn) + L-glutamate + ADP + phosphate + 2 H(+). In terms of biological role, allows the formation of correctly charged Asn-tRNA(Asn) or Gln-tRNA(Gln) through the transamidation of misacylated Asp-tRNA(Asn) or Glu-tRNA(Gln) in organisms which lack either or both of asparaginyl-tRNA or glutaminyl-tRNA synthetases. The reaction takes place in the presence of glutamine and ATP through an activated phospho-Asp-tRNA(Asn) or phospho-Glu-tRNA(Gln). In Burkholderia ambifaria (strain MC40-6), this protein is Aspartyl/glutamyl-tRNA(Asn/Gln) amidotransferase subunit C.